Here is a 194-residue protein sequence, read N- to C-terminus: Peptidyl-tRNA hydrolase (194 aa).

Y16 is a tRNA binding site. H21 acts as the Proton acceptor in catalysis. TRNA contacts are provided by F66, N68, and N114.

Belongs to the PTH family. In terms of assembly, monomer.

It localises to the cytoplasm. The catalysed reaction is an N-acyl-L-alpha-aminoacyl-tRNA + H2O = an N-acyl-L-amino acid + a tRNA + H(+). Its function is as follows. Hydrolyzes ribosome-free peptidyl-tRNAs (with 1 or more amino acids incorporated), which drop off the ribosome during protein synthesis, or as a result of ribosome stalling. Functionally, catalyzes the release of premature peptidyl moieties from peptidyl-tRNA molecules trapped in stalled 50S ribosomal subunits, and thus maintains levels of free tRNAs and 50S ribosomes. This is Peptidyl-tRNA hydrolase from Geobacter metallireducens (strain ATCC 53774 / DSM 7210 / GS-15).